The chain runs to 310 residues: Tagatose-6-phosphate kinase (310 aa).

Belongs to the carbohydrate kinase PfkB family. LacC subfamily.

The enzyme catalyses D-tagatofuranose 6-phosphate + ATP = D-tagatofuranose 1,6-bisphosphate + ADP + H(+). Its pathway is carbohydrate metabolism; D-tagatose 6-phosphate degradation; D-glyceraldehyde 3-phosphate and glycerone phosphate from D-tagatose 6-phosphate: step 1/2. The protein is Tagatose-6-phosphate kinase of Lactococcus lactis subsp. lactis (Streptococcus lactis).